The sequence spans 151 residues: DNA-directed RNA polymerase RPB6 homolog (151 aa).

Residues 20 to 44 are compositionally biased toward acidic residues; it reads ETEEENFVDSEEESEDKSEDKDEIV. Residues 20-46 are disordered; the sequence is ETEEENFVDSEEESEDKSEDKDEIVES.

This sequence belongs to the archaeal RpoK/eukaryotic RPB6 RNA polymerase subunit family. In terms of assembly, part of the viral DNA-directed RNA polymerase that consists of 8 polII-like subunits (RPB1, RPB2, RPB3, RPB5, RPB6, RPB7, RPB9, RPB10), a capping enzyme and a termination factor.

Its subcellular location is the host cytoplasm. It localises to the virion. Component of the DNA-directed RNA polymerase (RNAP) that catalyzes the transcription in the cytoplasm of viral DNA into RNA using the four ribonucleoside triphosphates as substrates. This African swine fever virus (isolate Tick/Malawi/Lil 20-1/1983) (ASFV) protein is DNA-directed RNA polymerase RPB6 homolog.